Reading from the N-terminus, the 129-residue chain is Transcriptional activator protein (129 aa).

Over residues 1–12 (MRSSSPSQPPSI) the composition is skewed to low complexity. A disordered region spans residues 1–21 (MRSSSPSQPPSIKKAHRQAKR). Positions 13-28 (KKAHRQAKRRAIRRRR) match the Nuclear localization signal motif. The segment at 33-50 (CGCSIYFHIDCTGHGFTH) is a zinc-finger region. Residues 84 to 114 (IHQNEDIPCTNTVQPQPEESVASPQSLPELP) are disordered. Over residues 92–109 (CTNTVQPQPEESVASPQS) the composition is skewed to polar residues. The interval 115 to 129 (SLDDFDDSFWVNLFK) is transactivation.

Belongs to the geminiviridae transcriptional activator protein family. In terms of assembly, monomer. Homodimer. Homooligomer. Self-interaction correlates with nuclear localization and efficient activation of transcription. Monomers suppress local silencing by interacting with and inactivating host adenosine kinase 2 (ADK2) in the cytoplasm. Interacts with and inhibits host SNF1 kinase. Binds to ssDNA. In terms of processing, phosphorylated.

The protein resides in the host nucleus. It localises to the host cytoplasm. In terms of biological role, strong activator of the late viral genes promoters. Enhances the expression of the capsid protein and nuclear shuttle protein. Acts as a suppressor of RNA-mediated gene silencing, also known as post-transcriptional gene silencing (PTGS), a mechanism of plant viral defense that limits the accumulation of viral RNAs. Suppresses the host RNA silencing by inhibiting adenosine kinase 2 (ADK2), a kinase involved in a general methylation pathway. Also suppresses the host basal defense by interacting with and inhibiting SNF1 kinase, a key regulator of cell metabolism implicated in innate antiviral defense. Determines pathogenicity. This Abutilon (Upland cotton) protein is Transcriptional activator protein.